A 240-amino-acid chain; its full sequence is UDP-2,3-diacylglucosamine hydrolase (240 aa).

Mn(2+) contacts are provided by Asp-8, His-10, Asp-41, Asn-79, and His-114. 79–80 (NR) contacts substrate. Residues Asp-122, Ser-160, Asn-164, Lys-167, and His-195 each coordinate substrate. Residues His-195 and His-197 each coordinate Mn(2+).

The protein belongs to the LpxH family. Requires Mn(2+) as cofactor.

The protein resides in the cell inner membrane. The catalysed reaction is UDP-2-N,3-O-bis[(3R)-3-hydroxytetradecanoyl]-alpha-D-glucosamine + H2O = 2-N,3-O-bis[(3R)-3-hydroxytetradecanoyl]-alpha-D-glucosaminyl 1-phosphate + UMP + 2 H(+). It participates in glycolipid biosynthesis; lipid IV(A) biosynthesis; lipid IV(A) from (3R)-3-hydroxytetradecanoyl-[acyl-carrier-protein] and UDP-N-acetyl-alpha-D-glucosamine: step 4/6. In terms of biological role, hydrolyzes the pyrophosphate bond of UDP-2,3-diacylglucosamine to yield 2,3-diacylglucosamine 1-phosphate (lipid X) and UMP by catalyzing the attack of water at the alpha-P atom. Involved in the biosynthesis of lipid A, a phosphorylated glycolipid that anchors the lipopolysaccharide to the outer membrane of the cell. In Escherichia coli O17:K52:H18 (strain UMN026 / ExPEC), this protein is UDP-2,3-diacylglucosamine hydrolase.